The chain runs to 117 residues: Protein Wnt-6 (117 aa).

The O-palmitoleoyl serine; by PORCN moiety is linked to residue serine 1. Cysteine 83 and cysteine 98 form a disulfide bridge. The N-linked (GlcNAc...) asparagine glycan is linked to asparagine 84.

The protein belongs to the Wnt family. In terms of processing, palmitoleoylation is required for efficient binding to frizzled receptors. Depalmitoleoylation leads to Wnt signaling pathway inhibition.

It localises to the secreted. The protein resides in the extracellular space. It is found in the extracellular matrix. Functionally, ligand for members of the frizzled family of seven transmembrane receptors. Probable developmental protein. May be a signaling molecule which affects the development of discrete regions of tissues. Is likely to signal over only few cell diameters. The sequence is that of Protein Wnt-6 (wnt6) from Thunnus thynnus (Atlantic bluefin tuna).